The following is a 1081-amino-acid chain: uncharacterized protein (1081 aa).

Coiled-coil stretches lie at residues 18–131 and 173–242; these read AIEE…FEEN and NHDE…NDDK. Positions 22-53 are enriched in basic and acidic residues; that stretch reads NNKNREIQEKRQKETKDRNDRMVQNQKDRKEM. A disordered region spans residues 22 to 60; that stretch reads NNKNREIQEKRQKETKDRNDRMVQNQKDRKEMIGLTNEK. Disordered stretches follow at residues 250-321 and 388-1081; these read TDDE…KPGI and QEPK…GNDE. Residues 267-283 show a composition bias toward pro residues; the sequence is TPTPTPTPTPTPTPTPT. Low complexity-rich tracts occupy residues 284–313 and 396–410; these read PTTTTTTTTTPKPTTTTTTTSTTTPTKTST and NNQSNNNNNNNQAGD. Basic and acidic residues predominate over residues 411-421; the sequence is DQNKNQNRDEN. Composition is skewed to low complexity over residues 422-568, 576-602, 614-623, 633-644, 662-672, and 680-733; these read NQGG…NNQE, NQDGGENNQDGGENNQDGENNQDGGEN, GENNQDGGEN, DGENNQDGGENN, GENNQDGGENN, and QDGG…NNQD. Composition is skewed to acidic residues over residues 748-768, 778-832, and 840-854; these read GGEDNQDGGEDNQDGGEDNQD, NNQD…DENN, and QDGDENNNQDGDENN. Composition is skewed to low complexity over residues 855-869 and 877-888; these read NQDGGENNQDGGENN and NQDGGENNQDGE. Positions 889 to 954 are enriched in acidic residues; it reads NNQDGDENNN…GDENNQDGDE (66 aa). Composition is skewed to low complexity over residues 955–975, 983–1026, and 1034–1081; these read NNQGNDENNQDGDQNNQGGDE, ENNQ…GGDE, and GENN…GNDE.

This is an uncharacterized protein from Dictyostelium discoideum (Social amoeba).